The sequence spans 377 residues: Dehydrogenase/reductase SDR family member 13 (377 aa).

The first 25 residues, 1 to 25, serve as a signal peptide directing secretion; that stretch reads MEALLLGAGLLLGAYVLVYYNLVKA. NAD(+)-binding residues include Ser46 and Ile48. Ser170 contributes to the substrate binding site. The NAD(+) site is built by Tyr197, Lys201, and Ser232. Catalysis depends on Tyr197, which acts as the Proton acceptor. Residues 309–377 form a disordered region; the sequence is RLAGLGPGED…AKVEPEIQLS (69 aa). Over residues 317-331 the composition is skewed to acidic residues; it reads EDAEPDEDPQSEDSE. The segment covering 347–357 has biased composition (low complexity); it reads SQPYPSPQSSP. Positions 368 to 377 are enriched in basic and acidic residues; that stretch reads AKVEPEIQLS.

The protein belongs to the short-chain dehydrogenases/reductases (SDR) family.

The protein resides in the secreted. Putative oxidoreductase. The chain is Dehydrogenase/reductase SDR family member 13 from Homo sapiens (Human).